The chain runs to 319 residues: Taste receptor type 2 member 39 (319 aa).

At 1 to 16 the chain is on the extracellular side; it reads MAQPSNYWKQDLLPLS. A helical transmembrane segment spans residues 17–37; sequence ILILTLVATECTIGIIASGII. Residues 38–56 are Cytoplasmic-facing; the sequence is TVVNAVSWVQKRAVSITTR. Residues 57-77 traverse the membrane as a helical segment; the sequence is ILLLLSVSRIGLQSIILIEMT. At 78 to 97 the chain is on the extracellular side; the sequence is SSIFNFSSYNSVLYRVSRVS. Residue Asn82 is glycosylated (N-linked (GlcNAc...) asparagine). A helical transmembrane segment spans residues 98 to 118; that stretch reads FVFLNYCSLWFAALLSFFHFV. Residues 119–137 are Cytoplasmic-facing; that stretch reads KIANFSYPLFFKLKWRISE. Residues 138-158 traverse the membrane as a helical segment; the sequence is LMPWLLWLSVFISFSSSMFFC. Residues 159–187 are Extracellular-facing; the sequence is NHKYTVYNNISLSSNICNFTMELYVAEAN. N-linked (GlcNAc...) asparagine glycans are attached at residues Asn167 and Asn176. A helical transmembrane segment spans residues 188 to 208; sequence VVNVAFLFSFGILPPLTMFIA. Topologically, residues 209–247 are cytoplasmic; it reads TATLLIFSLRRHTLHMRNGDADSRNPRVEAHKQAIKETS. The chain crosses the membrane as a helical span at residues 248-268; that stretch reads CFLFLYILYAAVLFLSTSNIA. Residues 269–273 are Extracellular-facing; the sequence is DASLF. A helical membrane pass occupies residues 274-294; sequence WSSVLRISLPVYPAGHSVLLI. The Cytoplasmic portion of the chain corresponds to 295-319; sequence QSNPGLKRTWKQLLSQIHLHLQSRY.

This sequence belongs to the G-protein coupled receptor T2R family.

Its subcellular location is the membrane. Its function is as follows. Putative taste receptor which may play a role in the perception of bitterness. The chain is Taste receptor type 2 member 39 from Rattus norvegicus (Rat).